The primary structure comprises 518 residues: MSKRALISVSDKEGIVEFAKEIRELGWEIISTGGTKAVLDQEEIPNIAIDEVTGFPEMMDGRLKTLHPLIHGALLGRRDLESHMKSMTEHHISPIDLVVVNLYPFKETLLAGGSQAEMIEKIDIGGPSMLRSAAKNHASVTVVCDPNDYEKVLTELSVKGETSLSFRQQLAAKVFRHTASYDALIAQYLTEEFPVENVKPEKLTLTYDLKQGMRYGENPQQNADFYESGIPTTYSIAQSKQIHGKELSYNNVRDADAALQIARDFEEPTVVALKHMNPCGIGTATDIEKAWDYAYEADPVSIFGGIIVLNREVTLATAQKMSKIFLEIIIAPSYSKEALEVLSKKKNIRLLTVDFSKKEASEKEALVTGVLGGLLVQNQDVIVENPKEWTVATKVQPTDRQMEAMKFAWKAVKFVKSNGIIVTNDHQTLGVGPGQTNRVGSVKIALEATADKSVELQENAVLGSDAFFPFADNIDEIAKAGIKAIVQPGGSVRDQEVIDACDKYGIAMVFTGLRHFRH.

The MGS-like domain maps to 1–144 (MSKRALISVS…KNHASVTVVC (144 aa)).

Belongs to the PurH family.

It carries out the reaction (6R)-10-formyltetrahydrofolate + 5-amino-1-(5-phospho-beta-D-ribosyl)imidazole-4-carboxamide = 5-formamido-1-(5-phospho-D-ribosyl)imidazole-4-carboxamide + (6S)-5,6,7,8-tetrahydrofolate. It catalyses the reaction IMP + H2O = 5-formamido-1-(5-phospho-D-ribosyl)imidazole-4-carboxamide. Its pathway is purine metabolism; IMP biosynthesis via de novo pathway; 5-formamido-1-(5-phospho-D-ribosyl)imidazole-4-carboxamide from 5-amino-1-(5-phospho-D-ribosyl)imidazole-4-carboxamide (10-formyl THF route): step 1/1. The protein operates within purine metabolism; IMP biosynthesis via de novo pathway; IMP from 5-formamido-1-(5-phospho-D-ribosyl)imidazole-4-carboxamide: step 1/1. This chain is Bifunctional purine biosynthesis protein PurH, found in Lactococcus lactis subsp. lactis (strain IL1403) (Streptococcus lactis).